The sequence spans 443 residues: Phosphoglucosamine mutase (443 aa).

Catalysis depends on Ser-102, which acts as the Phosphoserine intermediate. Ser-102, Asp-241, Asp-243, and Asp-245 together coordinate Mg(2+). The residue at position 102 (Ser-102) is a Phosphoserine.

Belongs to the phosphohexose mutase family. Mg(2+) is required as a cofactor. In terms of processing, activated by phosphorylation.

It catalyses the reaction alpha-D-glucosamine 1-phosphate = D-glucosamine 6-phosphate. Its function is as follows. Catalyzes the conversion of glucosamine-6-phosphate to glucosamine-1-phosphate. The sequence is that of Phosphoglucosamine mutase from Polaromonas naphthalenivorans (strain CJ2).